The chain runs to 306 residues: MIMVQGEVSGKKYTEPFSKGVLARSLTRAEMDPNRAYTFASRIEAHLKKNKVDLITIEELVEIVSEHLRKEDPEVAEKYMLWRKIRQCKEPLIILIGGASGVGTSSIAFEVANRLGIRNMISTDMIREVMRKIVSRELLPSIYESSYTAYQSLRIPPPPELDEVLIGFRDHVESVSIGVEAVIERALTEGISIVIEGVHIVPGFIREDLVNKENVAMFVLTVSDENVHKGRFYSRCRQMWARRPLKRYISYFWAIRRIHRYIENQARKHGVPVIENIDVVTTIDSIIKSLTKTTVKGGEKGAEKTE.

In terms of domain architecture, ATP-cone spans 1–90 (MIMVQGEVSG…LWRKIRQCKE (90 aa)).

The protein belongs to the 2-phosphoglycerate kinase family. Requires a divalent metal cation as cofactor.

It carries out the reaction (2R)-2-phosphoglycerate + ATP = (2R)-2,3-bisphosphoglycerate + ADP + H(+). It participates in thermoadapter biosynthesis; cyclic 2,3-diphosphoglycerate biosynthesis; cyclic 2,3-diphosphoglycerate from 2-phospho-D-glycerate: step 1/2. In terms of biological role, catalyzes the phosphorylation of 2-phosphoglycerate to 2,3-diphosphoglycerate. Involved in the biosynthesis of cyclic 2,3-bisphosphoglycerate, a thermoprotectant. The chain is 2-phosphoglycerate kinase from Methanothermobacter thermautotrophicus (strain ATCC 29096 / DSM 1053 / JCM 10044 / NBRC 100330 / Delta H) (Methanobacterium thermoautotrophicum).